The chain runs to 103 residues: Small ribosomal subunit protein uS10 (103 aa).

It belongs to the universal ribosomal protein uS10 family. In terms of assembly, part of the 30S ribosomal subunit.

Its function is as follows. Involved in the binding of tRNA to the ribosomes. The sequence is that of Small ribosomal subunit protein uS10 from Stenotrophomonas maltophilia (strain R551-3).